Consider the following 226-residue polypeptide: PKHD-type hydroxylase mma_3620 (226 aa).

Positions 78–178 (RYMPPLFNRY…RVCSFFWLQS (101 aa)) constitute a Fe2OG dioxygenase domain. Positions 96, 98, and 159 each coordinate Fe cation. A 2-oxoglutarate-binding site is contributed by Arg-169.

Fe(2+) is required as a cofactor. Requires L-ascorbate as cofactor.

This Janthinobacterium sp. (strain Marseille) (Minibacterium massiliensis) protein is PKHD-type hydroxylase mma_3620.